The primary structure comprises 471 residues: ATP synthase subunit beta (471 aa).

ATP is bound at residue Gly153–Thr160.

This sequence belongs to the ATPase alpha/beta chains family. In terms of assembly, F-type ATPases have 2 components, CF(1) - the catalytic core - and CF(0) - the membrane proton channel. CF(1) has five subunits: alpha(3), beta(3), gamma(1), delta(1), epsilon(1). CF(0) has four main subunits: a(1), b(1), b'(1) and c(9-12).

Its subcellular location is the cell membrane. It catalyses the reaction ATP + H2O + 4 H(+)(in) = ADP + phosphate + 5 H(+)(out). Produces ATP from ADP in the presence of a proton gradient across the membrane. The catalytic sites are hosted primarily by the beta subunits. This Roseiflexus sp. (strain RS-1) protein is ATP synthase subunit beta.